The following is a 1197-amino-acid chain: Protein timeless homolog (1197 aa).

The interval Met-1–Ser-309 is required for homodimerization and for interaction with CRY1 and CHEK1. Ser-281 carries the post-translational modification Phosphoserine. Disordered regions lie at residues Ser-647 to Gln-674 and Arg-943 to Asn-1002. The segment covering Pro-656 to Leu-673 has biased composition (acidic residues). A DNA-binding domain region spans residues Ser-810–Ser-949. Acidic residues predominate over residues Gln-963–Glu-985. Over residues Gly-986 to Ser-999 the composition is skewed to low complexity. The segment at Ser-997 to Leu-1095 is interaction with PARP1. A phosphoserine mark is found at Ser-1071 and Ser-1084. Residues Ile-1079–Asp-1197 form a required for nuclear localization region. Thr-1086 carries the phosphothreonine modification. The interval Leu-1088–Asp-1197 is disordered. Composition is skewed to acidic residues over residues Glu-1099–Glu-1109 and Thr-1143–Trp-1153. Residue Ser-1165 is modified to Phosphoserine.

The protein belongs to the timeless family. In terms of assembly, monomer. Homodimer or homomultimer. Component of the circadian core oscillator, which includes the CRY proteins, CLOCK or NPAS2, ARTNL/BMAL1 or ARTNL2/BMAL2, CSKN1D and/or CSNK1E, TIMELESS, and the PER proteins. Interacts directly with PER2; the interaction with PER2 is via its second PAS domain. Interacts directly with PER1 and PER3. Interacts with CRY1. Interacts with CRY2. Interacts with CHEK1, ATR and ATRIP. Interacts with CLSPN. Interacts (via N-terminus) with TIPIN. The TIMELESS-TIPIN heterodimer binds preferably to guanine-rich quadruplex-forming (G4) DNA structures. Associates with the MCM2-7 complex. Interacts with DNA polymerases alpha, delta and epsilon. Interacts with DDX11; this interaction increases recruitment of both proteins onto chromatin in response to replication stress induction by hydroxyurea. Interacts with PARP1; interaction is direct and independent of poly-ADP-ribose. In terms of tissue distribution, predominantly and robustly expressed in proliferative organs (spleen, thymus, intestine and testis) compared to those more differentiated such as kidney and liver (at protein level). Expressed in all tissues examined including brain, heart, lung, liver, skeletal muscle, kidney, placenta, pancreas, spleen, thymus and testis. Strongly expressed in the suprachiasmatic nucleus (SCN) and pars tuberalis, moderately in the cingulate cortex, pyrimidal cell layer of the piriform cortex, periventricular part of the caudate putamen, and granular layer of the cerebellum, and weakly in the cerebral cortex, gyrus dentatus, hippocampus and thalamic nuclei. In embryonic kidney, expression is highest in regions of active ureteric bud cell branching.

The protein resides in the nucleus. It is found in the chromosome. Its function is as follows. Plays an important role in the control of DNA replication, maintenance of replication fork stability, maintenance of genome stability throughout normal DNA replication, DNA repair and in the regulation of the circadian clock. Required to stabilize replication forks during DNA replication by forming a complex with TIPIN: this complex regulates DNA replication processes under both normal and stress conditions, stabilizes replication forks and influences both CHEK1 phosphorylation and the intra-S phase checkpoint in response to genotoxic stress. During DNA replication, inhibits the CMG complex ATPase activity and activates DNA polymerases catalytic activities, coupling DNA unwinding and DNA synthesis. TIMELESS promotes TIPIN nuclear localization. Plays a role in maintaining processive DNA replication past genomic guanine-rich DNA sequences that form G-quadruplex (G4) structures, possibly together with DDX1. Involved in cell survival after DNA damage or replication stress by promoting DNA repair. In response to double-strand breaks (DSBs), accumulates at DNA damage sites and promotes homologous recombination repair via its interaction with PARP1. May be specifically required for the ATR-CHEK1 pathway in the replication checkpoint induced by hydroxyurea or ultraviolet light. Involved in the determination of period length and in the DNA damage-dependent phase advancing of the circadian clock. Negatively regulates CLOCK|NPAS2-ARTNL/BMAL1|ARTNL2/BMAL2-induced transactivation of PER1 possibly via translocation of PER1 into the nucleus. May also play an important role in epithelial cell morphogenesis and formation of branching tubules. The protein is Protein timeless homolog of Mus musculus (Mouse).